The primary structure comprises 757 residues: Palmitoyltransferase AKR1 (757 aa).

Polar residues-rich tracts occupy residues 1-20 (MSDINTESGESTSLPNSTDP) and 36-46 (ESISSLQPIVS). The interval 1–54 (MSDINTESGESTSLPNSTDPPLSDVNIDVEDDDTAESISSLQPIVSNTTNPPEE) is disordered. The Cytoplasmic portion of the chain corresponds to 1-307 (MSDINTESGE…KLFKKSDHAK (307 aa)). ANK repeat units lie at residues 58–88 (PVLGQYHQACQKGDLATVKQLLDSGVLDLNT), 92–121 (GDITGLHWASINNRLSVVKYLISQGIDVNA), 126–155 (LEATPLHWAARYGYVHIVDCLLNKGADPTM), 159–188 (QGFNLLHLAVNSSNVMLVAYVLFFVVAKGI), 197–226 (KGRTPLLWAAYQGDSLSVMLLLKFGASTKI), and 230–259 (GGFTPLHWATVKGQPYVLTHLIRDGADFFL). The helical transmembrane segment at 308 to 328 (VITFFVPLVALSIIFILFTHL) threads the bilayer. Residues 329–331 (HPL) are Lumenal-facing. Residues 332-352 (FALLISLIFGLAVNKALKELI) traverse the membrane as a helical segment. Residues 353 to 375 (LPSYSNYGLHSTSLLKSPFLSGT) are Cytoplasmic-facing. Residues 376 to 396 (FFGSLLLLTIVWIFKIAPFTI) form a helical membrane-spanning segment. The Lumenal portion of the chain corresponds to 397–402 (FKSRLL). A helical membrane pass occupies residues 403 to 423 (TNFFMFLILMQIYYLFIKLIF). The Cytoplasmic portion of the chain corresponds to 424–498 (SDPGCVPIET…YNDIGLKNHK (75 aa)). Residues 455-505 (NFCLETWIRKPLRSHFSTLNTHNVARFDHFCPWIYNDIGLKNHKNFMWFIL) form the DHHC domain. C485 acts as the S-palmitoyl cysteine intermediate in catalysis. The helical transmembrane segment at 499 to 519 (NFMWFILLTEVGIWFFISLTM) threads the bilayer. The Lumenal portion of the chain corresponds to 520-550 (KYFDILEDTNEDVACFLLGDDELCAGFVYDR). Residues 551-571 (FTFLIALWALIQSVWVGFLIV) traverse the membrane as a helical segment. At 572-757 (VQVFQTFTGV…YPEPTGPESV (186 aa)) the chain is on the cytoplasmic side. The disordered stretch occupies residues 614 to 647 (ELRNDDDDTAASRTGNNPNHSNGTTIPSEGSRIN). The span at 624-646 (ASRTGNNPNHSNGTTIPSEGSRI) shows a compositional bias: polar residues.

It belongs to the DHHC palmitoyltransferase family. AKR/ZDHHC17 subfamily.

Its subcellular location is the early endosome membrane. The protein resides in the golgi apparatus membrane. The catalysed reaction is L-cysteinyl-[protein] + hexadecanoyl-CoA = S-hexadecanoyl-L-cysteinyl-[protein] + CoA. In terms of biological role, palmitoyltransferase specific for casein kinase 1. The sequence is that of Palmitoyltransferase AKR1 (AKR1) from Naumovozyma castellii (Yeast).